We begin with the raw amino-acid sequence, 408 residues long: Aspartate aminotransferase, cytoplasmic (408 aa).

The L-aspartate site is built by G36, W133, and N187. Residue K251 is modified to N6-(pyridoxal phosphate)lysine. L-aspartate is bound at residue R379.

This sequence belongs to the class-I pyridoxal-phosphate-dependent aminotransferase family. As to quaternary structure, homodimer. The cofactor is pyridoxal 5'-phosphate. As to expression, expressed in all somatic tissues including the nervous system.

The protein resides in the cytoplasm. It carries out the reaction L-aspartate + 2-oxoglutarate = oxaloacetate + L-glutamate. Its function is as follows. Biosynthesis of L-glutamate from L-aspartate. Important regulator of levels of glutamate, the major excitatory neurotransmitter of the central nervous system. The sequence is that of Aspartate aminotransferase, cytoplasmic from Caenorhabditis elegans.